The following is a 286-amino-acid chain: Transcription initiation factor IIA large subunit (286 aa).

3 disordered regions span residues Asn120–Thr145, Thr167–Glu195, and Lys208–Glu236. Basic and acidic residues predominate over residues Ser175 to Glu195. The span at Asp214–Glu236 shows a compositional bias: acidic residues.

The protein belongs to the TFIIA subunit 1 family. TFIIA is a heterodimer composed of the large TOA1 and a small TOA2 subunits. Interacts with KAP122.

It is found in the cytoplasm. The protein localises to the nucleus. In terms of biological role, TFIIA is a component of the transcription machinery of RNA polymerase II and implicated in the regulation of basal transcription. Interacts with TBP (the TATA-binding protein). This Saccharomyces cerevisiae (strain ATCC 204508 / S288c) (Baker's yeast) protein is Transcription initiation factor IIA large subunit (TOA1).